The following is a 190-amino-acid chain: Small ribosomal subunit protein eS7 (190 aa).

Belongs to the eukaryotic ribosomal protein eS7 family. As to quaternary structure, component of the small ribosomal subunit. Part of the small subunit (SSU) processome, composed of more than 70 proteins and the RNA chaperone small nucleolar RNA (snoRNA) U3.

It localises to the cytoplasm. The protein localises to the cytoskeleton. The protein resides in the microtubule organizing center. It is found in the centrosome. Its subcellular location is the nucleus. It localises to the nucleolus. Its function is as follows. Component of the small ribosomal subunit. The ribosome is a large ribonucleoprotein complex responsible for the synthesis of proteins in the cell. Required for rRNA maturation. Part of the small subunit (SSU) processome, first precursor of the small eukaryotic ribosomal subunit. During the assembly of the SSU processome in the nucleolus, many ribosome biogenesis factors, an RNA chaperone and ribosomal proteins associate with the nascent pre-rRNA and work in concert to generate RNA folding, modifications, rearrangements and cleavage as well as targeted degradation of pre-ribosomal RNA by the RNA exosome. The chain is Small ribosomal subunit protein eS7 (RpS7) from Spodoptera frugiperda (Fall armyworm).